The sequence spans 308 residues: MPTGDYDSKPSWADQVEEEGIDVEPLSPQIKKQDPASFVLDTPREVINGNIKTITEYKLNDKDKKIKIVRTFKIETLKASKVVAHRKNWKKFGNSEYDPPGPNVATTTVSDDVLMTFITNKEDLNNQEEEDPMNKLKGQKIVSCRICKGDHWTTRCPYKDTLGPMQKELAEQLGLSTADKEKAPGAEPEPAQAPVSKTGKYVPPSLRDGGSRRGESMQPNRRADDNATIRVTNLSEDTRETDLQELFRPFGSISRIYLAKDKTTGQSKGFAFISFHRREDAARAIAGVSGFGYDHLILNVEWAKPSTN.

2 disordered regions span residues M1 to P35 and S176 to A227. Over residues G185–P194 the composition is skewed to low complexity. A compositionally biased stretch (basic and acidic residues) spans G209 to A227. Residues A227 to P305 enclose the RRM domain.

Belongs to the eIF-3 subunit G family. In terms of assembly, component of the eukaryotic translation initiation factor 3 (eIF-3) complex, which is composed of 13 subunits: eif3a, eif3b, eif3c, eif3d, eif3e, eif3f, eif3g, eif3h, eif3i, eif3j, eif3k, eif3l and eif3m.

The protein resides in the cytoplasm. RNA-binding component of the eukaryotic translation initiation factor 3 (eIF-3) complex, which is involved in protein synthesis of a specialized repertoire of mRNAs and, together with other initiation factors, stimulates binding of mRNA and methionyl-tRNAi to the 40S ribosome. The eIF-3 complex specifically targets and initiates translation of a subset of mRNAs involved in cell proliferation. This subunit can bind 18S rRNA. The polypeptide is Eukaryotic translation initiation factor 3 subunit G-B (eif3g-b) (Xenopus laevis (African clawed frog)).